A 639-amino-acid polypeptide reads, in one-letter code: UvrABC system protein C (639 aa).

A GIY-YIG domain is found at 20–97 (ERSGVYRMFD…IKKFQPKFNI (78 aa)). The UVR domain maps to 207 to 242 (KELQENLSRKMEELSSQMRFEEAAEIRDRIKALSYV).

This sequence belongs to the UvrC family. Interacts with UvrB in an incision complex.

Its subcellular location is the cytoplasm. In terms of biological role, the UvrABC repair system catalyzes the recognition and processing of DNA lesions. UvrC both incises the 5' and 3' sides of the lesion. The N-terminal half is responsible for the 3' incision and the C-terminal half is responsible for the 5' incision. This is UvrABC system protein C from Rickettsia peacockii (strain Rustic).